The following is a 234-amino-acid chain: Sugar fermentation stimulation protein A (234 aa).

A DNA-binding region (H-T-H motif) is located at residues 201-220 (LLSEAQQRGVEILAYKAEIS).

This sequence belongs to the SfsA family.

Its function is as follows. Binds to DNA non-specifically. Could be a regulatory factor involved in maltose metabolism. The chain is Sugar fermentation stimulation protein A from Shigella flexneri.